The sequence spans 103 residues: Small ribosomal subunit protein uS10 (103 aa).

The protein belongs to the universal ribosomal protein uS10 family. In terms of assembly, part of the 30S ribosomal subunit.

Its function is as follows. Involved in the binding of tRNA to the ribosomes. This Hydrogenovibrio crunogenus (strain DSM 25203 / XCL-2) (Thiomicrospira crunogena) protein is Small ribosomal subunit protein uS10.